Here is a 729-residue protein sequence, read N- to C-terminus: Fatty acid oxidation complex subunit alpha (729 aa).

The tract at residues 1–189 (MLYQSETLQL…KVGLVDAVVA (189 aa)) is enoyl-CoA hydratase/isomerase. Asp-296 lines the substrate pocket. The tract at residues 311-729 (SAPKQAAVLG…LLDVSISQPA (419 aa)) is 3-hydroxyacyl-CoA dehydrogenase. Residues Met-324, Asp-343, 400 to 402 (VVE), Lys-407, and Ser-429 contribute to the NAD(+) site. His-450 (for 3-hydroxyacyl-CoA dehydrogenase activity) is an active-site residue. Asn-453 is a binding site for NAD(+). Residues Asn-500 and Tyr-660 each coordinate substrate.

The protein in the N-terminal section; belongs to the enoyl-CoA hydratase/isomerase family. This sequence in the C-terminal section; belongs to the 3-hydroxyacyl-CoA dehydrogenase family. In terms of assembly, heterotetramer of two alpha chains (FadB) and two beta chains (FadA).

It catalyses the reaction a (3S)-3-hydroxyacyl-CoA + NAD(+) = a 3-oxoacyl-CoA + NADH + H(+). The enzyme catalyses a (3S)-3-hydroxyacyl-CoA = a (2E)-enoyl-CoA + H2O. It carries out the reaction a 4-saturated-(3S)-3-hydroxyacyl-CoA = a (3E)-enoyl-CoA + H2O. The catalysed reaction is (3S)-3-hydroxybutanoyl-CoA = (3R)-3-hydroxybutanoyl-CoA. It catalyses the reaction a (3Z)-enoyl-CoA = a 4-saturated (2E)-enoyl-CoA. The enzyme catalyses a (3E)-enoyl-CoA = a 4-saturated (2E)-enoyl-CoA. The protein operates within lipid metabolism; fatty acid beta-oxidation. Involved in the aerobic and anaerobic degradation of long-chain fatty acids via beta-oxidation cycle. Catalyzes the formation of 3-oxoacyl-CoA from enoyl-CoA via L-3-hydroxyacyl-CoA. It can also use D-3-hydroxyacyl-CoA and cis-3-enoyl-CoA as substrate. The sequence is that of Fatty acid oxidation complex subunit alpha from Yersinia enterocolitica serotype O:8 / biotype 1B (strain NCTC 13174 / 8081).